A 205-amino-acid chain; its full sequence is Protein MIS12 homolog (205 aa).

Residues 108–205 adopt a coiled-coil conformation; that stretch reads PYSEEDFQHL…EKESKRLKIS (98 aa).

Belongs to the mis12 family. In terms of assembly, component of the MIS12 complex composed of MIS12, DSN1, NSL1 and PMF1. Also interacts with KNL1, CBX3, CBX5, NDC80 and ZWINT.

It is found in the chromosome. It localises to the centromere. The protein resides in the kinetochore. Its function is as follows. Part of the MIS12 complex which is required for normal chromosome alignment and segregation and for kinetochore formation during mitosis. Essential for proper kinetochore microtubule attachments. This is Protein MIS12 homolog from Homo sapiens (Human).